A 177-amino-acid chain; its full sequence is Large ribosomal subunit protein uL6 (177 aa).

Belongs to the universal ribosomal protein uL6 family. In terms of assembly, part of the 50S ribosomal subunit.

Functionally, this protein binds to the 23S rRNA, and is important in its secondary structure. It is located near the subunit interface in the base of the L7/L12 stalk, and near the tRNA binding site of the peptidyltransferase center. This is Large ribosomal subunit protein uL6 from Neisseria gonorrhoeae (strain ATCC 700825 / FA 1090).